Reading from the N-terminus, the 346-residue chain is Cytidine deaminase 5 (346 aa).

2 consecutive CMP/dCMP-type deaminase domains span residues Thr-20–Glu-148 and Asp-183–Ala-304. Asn-58–Glu-60 serves as a coordination point for substrate. His-71 contacts Zn(2+). Catalysis depends on Glu-73, which acts as the Proton donor. The Zn(2+) site is built by Cys-104 and Cys-107.

This sequence belongs to the cytidine and deoxycytidylate deaminase family. Homodimer. It depends on Zn(2+) as a cofactor.

The catalysed reaction is cytidine + H2O + H(+) = uridine + NH4(+). It carries out the reaction 2'-deoxycytidine + H2O + H(+) = 2'-deoxyuridine + NH4(+). Functionally, this enzyme scavenges exogenous and endogenous cytidine and 2'-deoxycytidine for UMP synthesis. The sequence is that of Cytidine deaminase 5 (CDA5) from Arabidopsis thaliana (Mouse-ear cress).